The following is a 109-amino-acid chain: Tyrosine-protein phosphatase 4 (109 aa).

In terms of domain architecture, Tyrosine-protein phosphatase spans 1–109; sequence SKSASIVMLT…QNSGNHPIVI (109 aa). Glu-78 lines the substrate pocket.

It belongs to the protein-tyrosine phosphatase family.

It catalyses the reaction O-phospho-L-tyrosyl-[protein] + H2O = L-tyrosyl-[protein] + phosphate. The chain is Tyrosine-protein phosphatase 4 (STY-4) from Styela plicata (Wrinkled sea squirt).